Reading from the N-terminus, the 534-residue chain is Origin of replication complex subunit 5 (534 aa).

Residues 1 to 36 (MPPKEESSKVTRRSTRSSASVTVENSEPIESHTPTI) form a disordered region. 83–90 (GGASTGKT) contacts ATP. Positions 129-136 (HRKCSLNG) match the Nuclear localization signal motif. Positions 397–428 (MFDSTGGMDNRKRKRKASEKSMEKKEIAEQEA) are disordered. Positions 414-424 (SEKSMEKKEIA) are enriched in basic and acidic residues.

The protein belongs to the ORC5 family. In terms of assembly, component of the origin recognition complex (ORC) composed of at least ORC1 (ORC1A or ORC1B), ORC2, ORC3, ORC4, ORC5 and ORC6. ORC is regulated in a cell-cycle and development dependent manner. It is sequentially assembled at the exit from anaphase of mitosis and disassembled as cells enter S phase. Interacts directly with ORC1A, ORC1B, ORC2, ORC3, ORC4 and ORC6. In terms of tissue distribution, follow a cell-cycle regulation with a peak at the G1/S-phase. Mostly expressed in flower buds and cauline leaves, and, to a lower exent, in roots, leaves and stems. Expressed at low levels ubiquitously.

It localises to the nucleus. Its function is as follows. Component of the origin recognition complex (ORC) that binds origins of replication. DNA-binding is ATP-dependent. The specific DNA sequences that define origins of replication have not been identified yet. ORC is required to assemble the pre-replication complex necessary to initiate DNA replication. This is Origin of replication complex subunit 5 from Arabidopsis thaliana (Mouse-ear cress).